The primary structure comprises 1925 residues: Diacylglycerol kinase eta (1925 aa).

The region spanning 82 to 175 (AIIREGYLMK…WLGSLKTATA (94 aa)) is the PH domain. 2 Phorbol-ester/DAG-type zinc fingers span residues 195–245 (HHHW…IANC) and 268–319 (PHQW…PIVC). Residues 350-486 (GNFSPLLVFV…DRWSIMVFEK (137 aa)) form the DAGKc domain. 8 disordered regions span residues 620 to 641 (EKDN…SEKE), 783 to 805 (ANID…TPTE), 847 to 872 (DKER…SEPQ), 1013 to 1065 (TTLC…NPQQ), 1113 to 1141 (DRNS…TRTY), 1167 to 1234 (NTTT…SSAS), 1256 to 1276 (IRRH…KDKD), and 1385 to 1405 (FSAG…PTEE). The segment covering 792 to 802 (LSPSSEAGENT) has biased composition (polar residues). The span at 863-872 (ADVNEKSEPQ) shows a compositional bias: basic and acidic residues. The segment covering 1115 to 1128 (NSGDNHNDNGKNEE) has biased composition (basic and acidic residues). The segment covering 1167-1187 (NTTTSTSSSISTTTTTSTTST) has biased composition (low complexity). Over residues 1386 to 1405 (SAGDKDEKPGKDKERTPTEE) the composition is skewed to basic and acidic residues. In terms of domain architecture, SAM spans 1862-1925 (WSVNEVVTWL…LQAIKDLSEN (64 aa)).

Belongs to the eukaryotic diacylglycerol kinase family.

It localises to the cytoplasm. The catalysed reaction is a 1,2-diacyl-sn-glycerol + ATP = a 1,2-diacyl-sn-glycero-3-phosphate + ADP + H(+). Functionally, phosphorylates diacylglycerol (DAG) to generate phosphatidic acid (PA). The chain is Diacylglycerol kinase eta from Drosophila mojavensis (Fruit fly).